The sequence spans 190 residues: Potassium-transporting ATPase KdpC subunit (190 aa).

A helical transmembrane segment spans residues 13–33; that stretch reads VGFLLLTLVCGVVYPGIVTII.

It belongs to the KdpC family. As to quaternary structure, the system is composed of three essential subunits: KdpA, KdpB and KdpC.

It localises to the cell membrane. In terms of biological role, part of the high-affinity ATP-driven potassium transport (or Kdp) system, which catalyzes the hydrolysis of ATP coupled with the electrogenic transport of potassium into the cytoplasm. This subunit acts as a catalytic chaperone that increases the ATP-binding affinity of the ATP-hydrolyzing subunit KdpB by the formation of a transient KdpB/KdpC/ATP ternary complex. This chain is Potassium-transporting ATPase KdpC subunit, found in Listeria welshimeri serovar 6b (strain ATCC 35897 / DSM 20650 / CCUG 15529 / CIP 8149 / NCTC 11857 / SLCC 5334 / V8).